A 479-amino-acid chain; its full sequence is Ribosomal RNA small subunit methyltransferase F (479 aa).

S-adenosyl-L-methionine-binding positions include 125–131 (AAAPGSK), Glu-149, Asp-176, and Asp-194. Catalysis depends on Cys-247, which acts as the Nucleophile.

This sequence belongs to the class I-like SAM-binding methyltransferase superfamily. RsmB/NOP family.

Its subcellular location is the cytoplasm. The catalysed reaction is cytidine(1407) in 16S rRNA + S-adenosyl-L-methionine = 5-methylcytidine(1407) in 16S rRNA + S-adenosyl-L-homocysteine + H(+). Functionally, specifically methylates the cytosine at position 1407 (m5C1407) of 16S rRNA. This Salmonella newport (strain SL254) protein is Ribosomal RNA small subunit methyltransferase F.